We begin with the raw amino-acid sequence, 380 residues long: Glycerate kinase (380 aa).

Belongs to the glycerate kinase type-1 family.

The enzyme catalyses (R)-glycerate + ATP = (2R)-3-phosphoglycerate + ADP + H(+). The protein is Glycerate kinase (glxK) of Halalkalibacterium halodurans (strain ATCC BAA-125 / DSM 18197 / FERM 7344 / JCM 9153 / C-125) (Bacillus halodurans).